Here is a 527-residue protein sequence, read N- to C-terminus: Bifunctional purine biosynthesis protein PurH (527 aa).

An MGS-like domain is found at 9 to 156 (MARKPIRRAL…KNHPSVAVVT (148 aa)).

Belongs to the PurH family.

It catalyses the reaction (6R)-10-formyltetrahydrofolate + 5-amino-1-(5-phospho-beta-D-ribosyl)imidazole-4-carboxamide = 5-formamido-1-(5-phospho-D-ribosyl)imidazole-4-carboxamide + (6S)-5,6,7,8-tetrahydrofolate. It carries out the reaction IMP + H2O = 5-formamido-1-(5-phospho-D-ribosyl)imidazole-4-carboxamide. It functions in the pathway purine metabolism; IMP biosynthesis via de novo pathway; 5-formamido-1-(5-phospho-D-ribosyl)imidazole-4-carboxamide from 5-amino-1-(5-phospho-D-ribosyl)imidazole-4-carboxamide (10-formyl THF route): step 1/1. The protein operates within purine metabolism; IMP biosynthesis via de novo pathway; IMP from 5-formamido-1-(5-phospho-D-ribosyl)imidazole-4-carboxamide: step 1/1. The polypeptide is Bifunctional purine biosynthesis protein PurH (Mycobacterium leprae (strain Br4923)).